We begin with the raw amino-acid sequence, 153 residues long: Cytochrome c oxidase subunit 5A, mitochondrial (153 aa).

The transit peptide at Met1–Phe20 directs the protein to the mitochondrion. The Mitochondrial matrix portion of the chain corresponds to Ala21–Asn88. A helical transmembrane segment spans residues Lys89 to Ala111. Residues Val112–Lys153 are Mitochondrial intermembrane-facing.

Belongs to the cytochrome c oxidase IV family. Component of the cytochrome c oxidase (complex IV, CIV), a multisubunit enzyme composed of 12 subunits. The complex is composed of a catalytic core of 3 subunits COX1, COX2 and COX3, encoded in the mitochondrial DNA, and 9 supernumerary subunits COX4, COX5A (or COX5B), COX6, COX7, COX8, COX9, COX12, COX13 and COX26, which are encoded in the nuclear genome. COX5A is the predominant subunit V during aerobic/normoxic growth, it gets replaced by COX5B under anaerobic/hypoxic conditions. The complex exists as a monomer or a dimer and forms supercomplexes (SCs) in the inner mitochondrial membrane with a dimer of ubiquinol-cytochrome c oxidoreductase (cytochrome b-c1 complex, complex III, CIII), resulting in 2 different assemblies (supercomplexes III(2)IV and III(2)IV(2)). COX5A interacts with COR1, CYT1 and QCR6 at the CIII-CIV interface.

The protein localises to the mitochondrion inner membrane. It functions in the pathway energy metabolism; oxidative phosphorylation. Component of the cytochrome c oxidase, the last enzyme in the mitochondrial electron transport chain which drives oxidative phosphorylation. The respiratory chain contains 3 multisubunit complexes succinate dehydrogenase (complex II, CII), ubiquinol-cytochrome c oxidoreductase (cytochrome b-c1 complex, complex III, CIII) and cytochrome c oxidase (complex IV, CIV), that cooperate to transfer electrons derived from NADH and succinate to molecular oxygen, creating an electrochemical gradient over the inner membrane that drives transmembrane transport and the ATP synthase. Cytochrome c oxidase is the component of the respiratory chain that catalyzes the reduction of oxygen to water. Electrons originating from reduced cytochrome c in the intermembrane space (IMS) are transferred via the dinuclear copper A center (CU(A)) of COX2 and heme A of COX1 to the active site in COX1, a binuclear center (BNC) formed by heme A3 and copper B (CU(B)). The BNC reduces molecular oxygen to 2 water molecules using 4 electrons from cytochrome c in the IMS and 4 protons from the mitochondrial matrix. The chain is Cytochrome c oxidase subunit 5A, mitochondrial (COX5A) from Saccharomyces cerevisiae (strain ATCC 204508 / S288c) (Baker's yeast).